Reading from the N-terminus, the 820-residue chain is MSLSSLFNGKYDTKFLLNMSSAAKVELIVEKVAALADACLETPLPTDWFRNILDPELEFNSNFEEIHSIGDEEFAQPLPFLPFRVLLITGTAGAGKTSSIQTLAANSDCLITATTSIAAQNLSGLLNRTKSAQVKTIFKTFGFNSSHVSMNERISCSVTTLDSIADQQKHDLSTYWNVIADIAERALNAANGKTKVIPDLCESSVIVIDEAGVILRHILHTVVFFYWFYNGLHKTQLYKNRVIPCIVCVGSPTQSGALISSFNPLTQNKDVKKGFDILSALICDDILSNYCKISENWVIFVNNKRCTDVEFGEFLKHIEFGLPLKPELIEYVDRFVRPATYIRNPTNEIGMTRLFLSHYEVKSYFKVLHEQVELTNKDNLFTFPVYFIIQNKAFEDYKNEISNFTLEIEPWFKTNLHRLNTYSQFADQDLSKTIQIEEIVLDDGSVEETLITCHLKHIKHSSIGVTSRTKSSTVGFSGTYEKFVELLQSDLFIEKTACEYSVHAYSFLTGLMYGGMYSFCLSEFTTSEVMTEIRKIKLPNIDFLQTMTAEVSLQTFDESDEYYDLHIAPTDEEMLASDPCPDPFFLKYKQLPLTNVLTFEEISYLYTVFKEIFISRFAILQRHSKEMFGKSNLITYNRNNVSSKRCGEICSHVKSFYGMLTYAVPANNYTLEGYTYDNVIFLGTDKMLPPIIYKRGLPKIVIKDEMGFISILDNNVSKLTDTVNGNSFHICTTIDYAIVSKVAMTVTKSQGLSIQRVALDFGNDPKNLKLSSIYVGMSRVVDPNNLIMNLNPLRLNYENDNIIASHIVKALKNKDTMLIF.

90 to 97 is a binding site for ATP; that stretch reads GTAGAGKT.

It belongs to the herpesviridae helicase family. Associates with the primase and the primase-associated factor to form the helicase-primase complex.

The protein localises to the host nucleus. Functionally, component of the helicase/primase complex. Unwinds the DNA at the replication forks and generates single-stranded DNA for both leading and lagging strand synthesis. The primase synthesizes short RNA primers on the lagging strand that the polymerase elongates using dNTPs. Possesses helicase-like motifs and therefore may act as the helicase subunit of the complex. The polypeptide is DNA replication helicase (Human herpesvirus 7 (strain JI) (HHV-7)).